The sequence spans 1391 residues: DNA-directed RNA polymerase subunit beta' (1391 aa).

Residues cysteine 70, cysteine 72, cysteine 85, and cysteine 88 each contribute to the Zn(2+) site. Mg(2+)-binding residues include aspartate 461, aspartate 463, and aspartate 465. Residues cysteine 809, cysteine 882, cysteine 889, and cysteine 892 each coordinate Zn(2+).

Belongs to the RNA polymerase beta' chain family. As to quaternary structure, the RNAP catalytic core consists of 2 alpha, 1 beta, 1 beta' and 1 omega subunit. When a sigma factor is associated with the core the holoenzyme is formed, which can initiate transcription. Requires Mg(2+) as cofactor. Zn(2+) serves as cofactor.

The enzyme catalyses RNA(n) + a ribonucleoside 5'-triphosphate = RNA(n+1) + diphosphate. DNA-dependent RNA polymerase catalyzes the transcription of DNA into RNA using the four ribonucleoside triphosphates as substrates. The sequence is that of DNA-directed RNA polymerase subunit beta' from Zymomonas mobilis subsp. mobilis (strain ATCC 31821 / ZM4 / CP4).